Reading from the N-terminus, the 129-residue chain is Small ribosomal subunit protein uS11 (129 aa).

Belongs to the universal ribosomal protein uS11 family. In terms of assembly, part of the 30S ribosomal subunit. Interacts with proteins S7 and S18. Binds to IF-3.

Functionally, located on the platform of the 30S subunit, it bridges several disparate RNA helices of the 16S rRNA. Forms part of the Shine-Dalgarno cleft in the 70S ribosome. In Thermosipho melanesiensis (strain DSM 12029 / CIP 104789 / BI429), this protein is Small ribosomal subunit protein uS11.